The following is a 431-amino-acid chain: Serine--tRNA ligase (431 aa).

237–239 (TAE) is an L-serine binding site. ATP is bound at residue 268 to 270 (RSE). Glutamate 291 is a binding site for L-serine. 355–358 (EISS) lines the ATP pocket. Residue serine 390 participates in L-serine binding.

This sequence belongs to the class-II aminoacyl-tRNA synthetase family. Type-1 seryl-tRNA synthetase subfamily. In terms of assembly, homodimer. The tRNA molecule binds across the dimer.

The protein localises to the cytoplasm. It catalyses the reaction tRNA(Ser) + L-serine + ATP = L-seryl-tRNA(Ser) + AMP + diphosphate + H(+). It carries out the reaction tRNA(Sec) + L-serine + ATP = L-seryl-tRNA(Sec) + AMP + diphosphate + H(+). It functions in the pathway aminoacyl-tRNA biosynthesis; selenocysteinyl-tRNA(Sec) biosynthesis; L-seryl-tRNA(Sec) from L-serine and tRNA(Sec): step 1/1. In terms of biological role, catalyzes the attachment of serine to tRNA(Ser). Is also able to aminoacylate tRNA(Sec) with serine, to form the misacylated tRNA L-seryl-tRNA(Sec), which will be further converted into selenocysteinyl-tRNA(Sec). The polypeptide is Serine--tRNA ligase (Neisseria gonorrhoeae (strain ATCC 700825 / FA 1090)).